A 294-amino-acid chain; its full sequence is UDP-3-O-acyl-N-acetylglucosamine deacetylase (294 aa).

Residues His75, His232, and Asp236 each coordinate Zn(2+). Residue His259 is the Proton donor of the active site.

Belongs to the LpxC family. It depends on Zn(2+) as a cofactor.

It catalyses the reaction a UDP-3-O-[(3R)-3-hydroxyacyl]-N-acetyl-alpha-D-glucosamine + H2O = a UDP-3-O-[(3R)-3-hydroxyacyl]-alpha-D-glucosamine + acetate. It functions in the pathway glycolipid biosynthesis; lipid IV(A) biosynthesis; lipid IV(A) from (3R)-3-hydroxytetradecanoyl-[acyl-carrier-protein] and UDP-N-acetyl-alpha-D-glucosamine: step 2/6. Functionally, catalyzes the hydrolysis of UDP-3-O-myristoyl-N-acetylglucosamine to form UDP-3-O-myristoylglucosamine and acetate, the committed step in lipid A biosynthesis. The protein is UDP-3-O-acyl-N-acetylglucosamine deacetylase of Campylobacter hominis (strain ATCC BAA-381 / DSM 21671 / CCUG 45161 / LMG 19568 / NCTC 13146 / CH001A).